The primary structure comprises 343 residues: Methionine import ATP-binding protein MetN 2 (343 aa).

The region spanning 2–241 (IEFKDVTKTF…PQQAVTKRFV (240 aa)) is the ABC transporter domain. 38–45 (GYSGAGKS) is a binding site for ATP.

The protein belongs to the ABC transporter superfamily. Methionine importer (TC 3.A.1.24) family. In terms of assembly, the complex is composed of two ATP-binding proteins (MetN), two transmembrane proteins (MetI) and a solute-binding protein (MetQ).

It is found in the cell membrane. It catalyses the reaction L-methionine(out) + ATP + H2O = L-methionine(in) + ADP + phosphate + H(+). The enzyme catalyses D-methionine(out) + ATP + H2O = D-methionine(in) + ADP + phosphate + H(+). In terms of biological role, part of the ABC transporter complex MetNIQ involved in methionine import. Responsible for energy coupling to the transport system. The chain is Methionine import ATP-binding protein MetN 2 from Lactiplantibacillus plantarum (strain ATCC BAA-793 / NCIMB 8826 / WCFS1) (Lactobacillus plantarum).